The primary structure comprises 612 residues: Apoptosis-inducing factor 1, mitochondrial (612 aa).

Short sequence motifs (mitochondrial localization signal) lie at residues 1 to 30 (MFRCGGLAGAFKQKLVPLVRSVCVQRPKQR) and 62 to 88 (KMDNSVLVLIVGLSTIGAGAYAYKTIK). The N-terminal 53 residues, 1–53 (MFRCGGLAGAFKQKLVPLVRSVCVQRPKQRNRLPGNLFQQWRVPLELQMARQM), are a transit peptide targeting the mitochondrion. 2 propeptides (removed in mature form) span residues 54-100 (ASSG…RIMG) and 55-101 (SSGP…IMGL). Lysine 108 carries the N6-succinyllysine modification. Serine 115 carries the phosphoserine modification. The interval 133–482 (FLLIGGGTAA…KPYWHQSMFW (350 aa)) is FAD-dependent oxidoreductase. FAD is bound by residues 137–141 (GGGTA), 163–164 (ED), arginine 171, and lysine 176. Tryptophan 195 is an NAD(+) binding site. Valine 232 lines the FAD pocket. Residue lysine 254 forms a Glycyl lysine isopeptide (Lys-Gly) (interchain with G-Cter in ubiquitin) linkage. Serine 267 is subject to Phosphoserine. Position 284 (arginine 284) interacts with FAD. NAD(+)-binding positions include 307–310 (GGFL), glutamate 335, and lysine 341. Serine 370 is modified (phosphoserine). Position 387 is an N6-acetyllysine (lysine 387). Glycine 398 lines the NAD(+) pocket. Residue aspartate 437 coordinates FAD. Positions 445–450 (KLGRRR) match the Nuclear localization signal motif. NAD(+) is bound by residues 452-453 (EH), tryptophan 482, and glutamate 492. FAD-binding positions include 453–454 (HH) and tryptophan 482. The segment covering 512–528 (AQDNPKSATEQSGTGIR) has biased composition (polar residues). The segment at 512–551 (AQDNPKSATEQSGTGIRSESETESEASEITIPPSDPAVPQ) is disordered. Threonine 520 is modified (phosphothreonine). 2 positions are modified to phosphoserine: serine 523 and serine 529. Asparagine 582 is an NAD(+) binding site. Lysine 592 carries the N6-acetyllysine modification.

The protein belongs to the FAD-dependent oxidoreductase family. Monomer (oxidized form). Homodimer (reduced form). Upon reduction with NADH, undergoes dimerization and forms tight, long-lived FADH2-NAD charge transfer complexes (CTC) resistant to oxidation. Also dimerizes with isoform 3 preventing its release from mitochondria. Interacts with XIAP/BIRC4. Interacts (via N-terminus) with EIF3G (via C-terminus). Interacts with PRELID1. Interacts with CHCHD4; the interaction increases in presence of NADH. Interacts with processed form of PARP1 (Poly [ADP-ribose] polymerase 1, processed C-terminus); interaction is mediated with poly-ADP-ribose chains attached to PARP1, promoting translocation into the nucleus. Requires FAD as cofactor. Post-translationally, under normal conditions, a 54-residue N-terminal segment is first proteolytically removed during or just after translocation into the mitochondrial intermembrane space (IMS) by the mitochondrial processing peptidase (MPP) to form the inner-membrane-anchored mature form (AIFmit). During apoptosis, it is further proteolytically processed at amino-acid position 101 leading to the generation of the mature form, which is confined to the mitochondrial IMS in a soluble form (AIFsol). AIFsol is released to the cytoplasm in response to specific death signals, and translocated to the nucleus, where it induces nuclear apoptosis in a caspase-independent manner. Ubiquitination by XIAP/BIRC4 does not lead to proteasomal degradation. Ubiquitination at Lys-254 by XIAP/BIRC4 blocks its ability to bind DNA and induce chromatin degradation, thereby inhibiting its ability to induce cell death.

It is found in the mitochondrion intermembrane space. The protein resides in the mitochondrion inner membrane. The protein localises to the cytoplasm. Its subcellular location is the nucleus. It localises to the perinuclear region. It catalyses the reaction A + NADH + H(+) = AH2 + NAD(+). Its function is as follows. Functions both as NADH oxidoreductase and as regulator of apoptosis. In response to apoptotic stimuli, it is released from the mitochondrion intermembrane space into the cytosol and to the nucleus, where it functions as a proapoptotic factor in a caspase-independent pathway. Release into the cytoplasm is mediated upon binding to poly-ADP-ribose chains. The soluble form (AIFsol) found in the nucleus induces 'parthanatos' i.e. caspase-independent fragmentation of chromosomal DNA. Binds to DNA in a sequence-independent manner. Interacts with EIF3G, and thereby inhibits the EIF3 machinery and protein synthesis, and activates caspase-7 to amplify apoptosis. Plays a critical role in caspase-independent, pyknotic cell death in hydrogen peroxide-exposed cells. In contrast, participates in normal mitochondrial metabolism. Plays an important role in the regulation of respiratory chain biogenesis by interacting with CHCHD4 and controlling CHCHD4 mitochondrial import. The chain is Apoptosis-inducing factor 1, mitochondrial (Aifm1) from Rattus norvegicus (Rat).